We begin with the raw amino-acid sequence, 1446 residues long: E3 ubiquitin-protein ligase listerin (1446 aa).

HEAT repeat units follow at residues 71–108, 115–153, 324–361, 363–399, 413–450, 630–669, 684–721, 1046–1083, 1107–1144, 1165–1202, and 1251–1289; these read QTRE…LTTD, MLTM…VTNG, SLQK…LLQK, ENPA…TFSD, EILK…WIIE, AENV…AEDE, GDFE…FCDA, LRAL…PAFQ, SVAR…KLSL, LLDL…NALN, and FKSM…RLLI. The RING-type zinc finger occupies 1395–1442; the sequence is CTICMMTVHQQTHQLPKIKCKQCKNKFHSNCLYKWFESSNQSTCPLCR.

Belongs to the LTN1 family. As to quaternary structure, component of the ribosome quality control complex (RQC), composed of at least the E3 ubiquitin ligase ltn1 and nemf. The complex probably also contains tcf25 as well as vcp/p97 and its ubiquitin-binding cofactors. RQC forms a stable complex with 60S ribosomal subunits.

Its subcellular location is the cytoplasm. It is found in the cytosol. It catalyses the reaction S-ubiquitinyl-[E2 ubiquitin-conjugating enzyme]-L-cysteine + [acceptor protein]-L-lysine = [E2 ubiquitin-conjugating enzyme]-L-cysteine + N(6)-ubiquitinyl-[acceptor protein]-L-lysine.. The protein operates within protein modification; protein ubiquitination. In terms of biological role, E3 ubiquitin-protein ligase. Component of the ribosome quality control complex (RQC), a ribosome-associated complex that mediates ubiquitination and extraction of incompletely synthesized nascent chains for proteasomal degradation. Ubiquitination leads to vcp/p97 recruitment for extraction and degradation of the incomplete translation product. This Caenorhabditis elegans protein is E3 ubiquitin-protein ligase listerin.